Consider the following 403-residue polypeptide: Dynactin subunit 2-A (403 aa).

Residues 1–26 (MADPKYADLPGIARNEPDVYETSDLP) form a disordered region. Residues 99 to 132 (PQQKYQRLLHEVQELTQEVEKTQSTVKESAAEEK) are a coiled coil. A disordered region spans residues 183–203 (AAKTRKNPEGKSPAKGPGPDT). A coiled-coil region spans residues 381–401 (KENLATVEDNFSNIDGRIKKL).

The protein belongs to the dynactin subunit 2 family. Subunit of dynactin, a multiprotein complex part of a tripartite complex with dynein and a adapter, such as BICDL1, BICD2 or HOOK3. The dynactin complex is built around ACTR1A/ACTB filament and consists of an actin-related filament composed of a shoulder domain, a pointed end and a barbed end. Its length is defined by its flexible shoulder domain. The soulder is composed of 2 DCTN1 subunits, 4 DCTN2 and 2 DCTN3.

It localises to the cytoplasm. It is found in the cytoskeleton. The protein localises to the microtubule organizing center. Its subcellular location is the centrosome. The protein resides in the membrane. Part of the dynactin complex that activates the molecular motor dynein for ultra-processive transport along microtubules. In the dynactin soulder domain, binds the ACTR1A filament and acts as a molecular ruler to determine the length. Modulates cytoplasmic dynein binding to an organelle, and plays a role in prometaphase chromosome alignment and spindle organization during mitosis. Involved in anchoring microtubules to centrosomes. This Xenopus laevis (African clawed frog) protein is Dynactin subunit 2-A (dctn2-a).